The primary structure comprises 102 residues: MVYAVVRAGGRQEKVEVGTIVTMDRVKNQQSGKVVLPAVLLVDGDTITTDAAKLADVTVSAEILNDLRGPKIVIQKFKNKTGYKKRQGHRQDLTRVQVTEIN.

It belongs to the bacterial ribosomal protein bL21 family. As to quaternary structure, part of the 50S ribosomal subunit. Contacts protein L20.

In terms of biological role, this protein binds to 23S rRNA in the presence of protein L20. In Clavibacter sepedonicus (Clavibacter michiganensis subsp. sepedonicus), this protein is Large ribosomal subunit protein bL21.